Consider the following 356-residue polypeptide: Holliday junction branch migration complex subunit RuvB (356 aa).

Residues 4–190 form a large ATPase domain (RuvB-L) region; it reads TDKLAAERII…FGIVARLEFY (187 aa). ATP is bound by residues L29, R30, G71, K74, T75, T76, 137–139, R180, Y190, and R227; that span reads EDY. T75 is a binding site for Mg(2+). A small ATPAse domain (RuvB-S) region spans residues 191–261; sequence DAEQLSRIVR…VADAALAMLD (71 aa). The tract at residues 264-356 is head domain (RuvB-H); it reads PVGFDLMDRK…NLWDTPDAEC (93 aa). Residues R300, R319, and R324 each coordinate DNA.

It belongs to the RuvB family. In terms of assembly, homohexamer. Forms an RuvA(8)-RuvB(12)-Holliday junction (HJ) complex. HJ DNA is sandwiched between 2 RuvA tetramers; dsDNA enters through RuvA and exits via RuvB. An RuvB hexamer assembles on each DNA strand where it exits the tetramer. Each RuvB hexamer is contacted by two RuvA subunits (via domain III) on 2 adjacent RuvB subunits; this complex drives branch migration. In the full resolvosome a probable DNA-RuvA(4)-RuvB(12)-RuvC(2) complex forms which resolves the HJ.

The protein resides in the cytoplasm. The catalysed reaction is ATP + H2O = ADP + phosphate + H(+). In terms of biological role, the RuvA-RuvB-RuvC complex processes Holliday junction (HJ) DNA during genetic recombination and DNA repair, while the RuvA-RuvB complex plays an important role in the rescue of blocked DNA replication forks via replication fork reversal (RFR). RuvA specifically binds to HJ cruciform DNA, conferring on it an open structure. The RuvB hexamer acts as an ATP-dependent pump, pulling dsDNA into and through the RuvAB complex. RuvB forms 2 homohexamers on either side of HJ DNA bound by 1 or 2 RuvA tetramers; 4 subunits per hexamer contact DNA at a time. Coordinated motions by a converter formed by DNA-disengaged RuvB subunits stimulates ATP hydrolysis and nucleotide exchange. Immobilization of the converter enables RuvB to convert the ATP-contained energy into a lever motion, pulling 2 nucleotides of DNA out of the RuvA tetramer per ATP hydrolyzed, thus driving DNA branch migration. The RuvB motors rotate together with the DNA substrate, which together with the progressing nucleotide cycle form the mechanistic basis for DNA recombination by continuous HJ branch migration. Branch migration allows RuvC to scan DNA until it finds its consensus sequence, where it cleaves and resolves cruciform DNA. The chain is Holliday junction branch migration complex subunit RuvB from Burkholderia pseudomallei (strain 668).